The primary structure comprises 242 residues: MMNFADTLVILNEDAPCELLRKKYAQMLVPTVSVSNFKKNKQYKTYNNVFLYTYREYDFLWDLDDNVLHKIQRCLNKSGVLKLVLYISNTDGGDNKTHDEIAKRLKRECLYSGFINISNEISMAENGIIINVTAENPDFLSNEDDDEGNSSDGEAYQNAEDNKKVVNRVCANCTCGKKTNGVKLDKVTINEKEVQYLTENAVSSCGNCYLGDAFRCASCPYKGLPAFQPGENVKLNLDNEPN.

The interval 1–140 is N-terminal SAM-like domain; it reads MMNFADTLVI…NVTAENPDFL (140 aa). Positions 141–162 are linker; the sequence is SNEDDDEGNSSDGEAYQNAEDN. [4Fe-4S] cluster is bound by residues Cys205, Cys208, Cys216, and Cys219. Short sequence motifs (cx2C motif) lie at residues 205 to 208 and 216 to 219; these read CGNC and CASC. Residues 205–219 are fe-S binding site B; sequence CGNCYLGDAFRCASC.

It belongs to the anamorsin family. Monomer. Requires [4Fe-4S] cluster as cofactor.

It localises to the cytoplasm. The protein localises to the mitochondrion intermembrane space. In terms of biological role, component of the cytosolic iron-sulfur (Fe-S) protein assembly (CIA) machinery. Required for the maturation of extramitochondrial Fe-S proteins. Part of an electron transfer chain functioning in an early step of cytosolic Fe-S biogenesis, facilitating the de novo assembly of a [4Fe-4S] cluster on the cytosolic Fe-S scaffold complex. Electrons are transferred from NADPH via a FAD- and FMN-containing diflavin oxidoreductase. Together with the diflavin oxidoreductase, also required for the assembly of the diferric tyrosyl radical cofactor of ribonucleotide reductase (RNR), probably by providing electrons for reduction during radical cofactor maturation in the catalytic small subunit. In Plasmodium knowlesi (strain H), this protein is Anamorsin homolog.